A 292-amino-acid polypeptide reads, in one-letter code: NAD kinase (292 aa).

Asp73 functions as the Proton acceptor in the catalytic mechanism. Residues 73–74, 147–148, His158, Arg175, Asp177, 188–193, and Gln247 contribute to the NAD(+) site; these read DG, NE, and TAYSLS.

This sequence belongs to the NAD kinase family. It depends on a divalent metal cation as a cofactor.

It is found in the cytoplasm. The catalysed reaction is NAD(+) + ATP = ADP + NADP(+) + H(+). In terms of biological role, involved in the regulation of the intracellular balance of NAD and NADP, and is a key enzyme in the biosynthesis of NADP. Catalyzes specifically the phosphorylation on 2'-hydroxyl of the adenosine moiety of NAD to yield NADP. The chain is NAD kinase from Serratia proteamaculans (strain 568).